We begin with the raw amino-acid sequence, 369 residues long: DNA polymerase processivity factor (369 aa).

The disordered stretch occupies residues 345 to 369 (IGSRKRGPSSPPFEREGKLAKVINQ).

Belongs to the herpesviridae DNA polymerase processivity factor family. As to quaternary structure, interacts with the DNA polymerase catalytic subunit. Interacts with the origin-binding protein.

The protein localises to the host nucleus. Functionally, plays an essential role in viral DNA replication by acting as the polymerase accessory subunit. Associates with the viral polymerase to increase its processivity and forms high-affinity direct interactions with DNA. Facilitates the origin-binding protein UL9 loading onto DNA thus increasing its ability to assemble into a functional complex capable of unwinding duplex DNA. The chain is DNA polymerase processivity factor (MDV055) from Gallus gallus (Chicken).